Reading from the N-terminus, the 186-residue chain is Threonylcarbamoyl-AMP synthase (186 aa).

A YrdC-like domain is found at 2–186; the sequence is STEFEQAVAA…ARTGAVIRPS (185 aa).

Belongs to the SUA5 family. TsaC subfamily.

The protein localises to the cytoplasm. The enzyme catalyses L-threonine + hydrogencarbonate + ATP = L-threonylcarbamoyladenylate + diphosphate + H2O. In terms of biological role, required for the formation of a threonylcarbamoyl group on adenosine at position 37 (t(6)A37) in tRNAs that read codons beginning with adenine. Catalyzes the conversion of L-threonine, HCO(3)(-)/CO(2) and ATP to give threonylcarbamoyl-AMP (TC-AMP) as the acyladenylate intermediate, with the release of diphosphate. The sequence is that of Threonylcarbamoyl-AMP synthase from Aeromonas salmonicida (strain A449).